Here is a 997-residue protein sequence, read N- to C-terminus: MAMAEFVFCRPLFGLAIVLLVAPIDAAQRHTASDNPSTYNIGGVLSNSDSEEHFSTTIKHLNFDQQYVPRKVTYYDKTIRMDKNPIKTVFNVCDKLIENRVYAVVVSHEQTSGDLSPAAVSYTSGFYSIPVIGISSRDAAFSDKNIHVSFLRTVPPYYHQADVWLEMLSHFAYTKVIIIHSSDTDGRAILGRFQTTSQTYYDDVDVRATVELIVEFEPKLESFTEHLIDMKTAQSRVYLMYASTEDAQVIFRDAGEYNMTGEGHVWIVTEQALFSNNTPDGVLGLQLEHAHSDKGHIRDSVYVLASAIKEMISNETIAEAPKDCGDSAVNWESGKRLFQYLKSRNITGETGQVAFDDNGDRIYAGYDVINIREQQKKHVVGKFSYDSMRAKMRMRINDSEIIWPGKQRRKPEGIMIPTHLRLLTIEEKPFVYVRRMGDDEFRCEPDERPCPLFNNSDATANEFCCRGYCIDLLIELSKRINFTYDLALSPDGQFGHYILRNNTGAMTLRKEWTGLIGELVNERADMIVAPLTINPERAEYIEFSKPFKYQGITILEKKPSRSSTLVSFLQPFSNTLWILVMVSVHVVALVLYLLDRFSPFGRFKLSHSDSNEEKALNLSSAVWFAWGVLLNSGIGEGTPRSFSARVLGMVWAGFAMIIVASYTANLAAFLVLERPKTKLSGINDARLRNTMENLTCATVKGSSVDMYFRRQVELSNMYRTMEANNYATAEQAIQDVKKGKLMAFIWDSSRLEYEASKDCELVTAGELFGRSGYGIGLQKGSPWTDAVTLAILEFHESGFMEKLDKQWIFHGHVQQNCELFEKTPNTLGLKNMAGVFILVGVGIAGGVGLIIIEVIYKKHQVKKQKRLDIARHAADKWRGTIEKRKTIRASLAMQRQYNVGLNSTHAPGTISLAVDKRRYPRLGQRLGPERAWPGDAADVLRIRRPYELGNPGQSPKVMAANQPGMPMPMLGKTRPQQSVLPPRYSPGYTSDVSHLVV.

Residues Met-1 to Ala-26 form the signal peptide. At Ala-27–Ser-573 the chain is on the extracellular side. N-linked (GlcNAc...) asparagine glycosylation is found at Asn-258, Asn-314, Asn-345, Asn-397, Asn-454, Asn-481, and Asn-501. Residues Pro-530–Thr-532 and Arg-537 each bind glycine. A helical transmembrane segment spans residues Asn-574 to Leu-594. Over Asp-595–Trp-651 the chain is Cytoplasmic. A helical transmembrane segment spans residues Ala-652–Leu-672. At Glu-673–Asn-831 the chain is on the extracellular side. Asn-693 is a glycosylation site (N-linked (GlcNAc...) asparagine). The glycine site is built by Ser-703 and Asp-747. Residues Met-832–Ile-852 form a helical membrane-spanning segment. The Cytoplasmic portion of the chain corresponds to Glu-853–Val-997. A disordered region spans residues Leu-970–Val-997. Polar residues predominate over residues Gly-987–Val-997.

The protein belongs to the glutamate-gated ion channel (TC 1.A.10.1) family. In terms of assembly, forms a heteromeric NMDA channel with Nmdar2. As to expression, highly expressed in adult heads: in the brain and ring gland. Low expression throughout the entire brain is also seen. Higher expression levels were observed in some scattered cell bodies and part of their fibers, including those from several pairs of DPM (dorsal-posterior-medial) neurons surrounding the calyx, DAL (dorsal-anterior-lateral) and DPL (dorsal-posterior-lateral) neurons in the lateral protocerebrum (LP), VAL (ventral-anterior-lateral) neurons in the anterior protocerebrum, and two pairs of VP (ventral-posterior) neurons in the posterior protocerebrum. Many cell bodies in the optic lobes show preferential expression. Punctuate expression is notably detected in many brain regions including the superior medial protocerebrum. Weakly expressed in the antennal lobes and central complex.

The protein resides in the cell membrane. The protein localises to the postsynaptic cell membrane. It localises to the postsynaptic density. Its function is as follows. NMDA receptor subtype of glutamate-gated ion channels with high calcium permeability and voltage-dependent sensitivity to magnesium. Mediated by glycine. This protein plays a key role in synaptic plasticity, synaptogenesis, excitotoxicity, memory acquisition and learning. It mediates neuronal functions in glutamate neurotransmission. Is involved in the cell surface targeting of NMDA receptors. Plays a role in associative learning and in long-term memory consolidation. This is Glutamate [NMDA] receptor subunit 1 from Drosophila melanogaster (Fruit fly).